Reading from the N-terminus, the 197-residue chain is MKLYSVSILRFDPKPVQLLCTASDLSSFSFFQRSSIGEFMNFFTKTVAERTNPGQRQDVEQSNYVFHVYNRSDGLCGVIASDKEYPLRVAYTLLNKILDEFLTKNPRTKWESGAVTLSFPELDTYLSKYQDPKQADTIMRVQQELDETKDVLHKTIESVLARGEKLDDLIQRSDNLSTQSRMFYKSAKKQNSCCIIA.

Positions 7 to 126 (SILRFDPKPV…LSFPELDTYL (120 aa)) constitute a Longin domain. One can recognise a v-SNARE coiled-coil homology domain in the interval 137–197 (TIMRVQQELD…KKQNSCCIIA (61 aa)). Cysteine 193 carries S-palmitoyl cysteine lipidation. At cysteine 194 the chain carries Cysteine methyl ester. Residue cysteine 194 is the site of S-farnesyl cysteine attachment. Residues 195–197 (IIA) constitute a propeptide, removed in mature form.

The protein belongs to the synaptobrevin family.

Its subcellular location is the cell membrane. The protein is Synaptobrevin homolog ykt6 (ykt6) of Schizosaccharomyces pombe (strain 972 / ATCC 24843) (Fission yeast).